Reading from the N-terminus, the 285-residue chain is MRRVTLHCAARLVIAALWLLVEVCRAESGAQSLAERVIWAVNAGGDTHTDVHGIQFKKDPLEGKVGKASDYGVRLPILRSSPEDQILYQTERYNEDTFGYEVPIREEGDYILVMKYAEVYFAQSQQKVFDVRLNGHVVVKDLDIFDRVGHSTAHDEIVPFSIKRGKLSVHGEVSTFNGKLTVEFVKGYYDNPKICALYVMKGKLEDVPKLQPHPGLEKREEEEEEEEEGEGPEGEKKSASTSPKNPVRSGPRTPNPYATDNSSLMFPILVAFGVFIPTLFCLCRL.

An N-terminal signal peptide occupies residues 1–26 (MRRVTLHCAARLVIAALWLLVEVCRA). The Lumenal segment spans residues 27 to 262 (ESGAQSLAER…TPNPYATDNS (236 aa)). A carbohydrate is bound by residues tyrosine 71, tyrosine 93, tyrosine 120, phenylalanine 121, and aspartate 190. Residues 209 to 258 (KLQPHPGLEKREEEEEEEEEGEGPEGEKKSASTSPKNPVRSGPRTPNPYA) form a disordered region. A compositionally biased stretch (acidic residues) spans 220-232 (EEEEEEEEEGEGP). N-linked (GlcNAc...) asparagine glycosylation occurs at asparagine 261. A helical transmembrane segment spans residues 263 to 283 (SLMFPILVAFGVFIPTLFCLC). Residues 284 to 285 (RL) are Cytoplasmic-facing.

The protein belongs to the malectin family.

The protein resides in the endoplasmic reticulum membrane. Functionally, carbohydrate-binding protein with a strong ligand preference for Glc2-N-glycan. May play a role in the early steps of protein N-glycosylation. The polypeptide is Malectin (Danio rerio (Zebrafish)).